Consider the following 448-residue polypeptide: Phosphoglucosamine mutase (448 aa).

S101 serves as the catalytic Phosphoserine intermediate. Mg(2+) contacts are provided by S101, D242, D244, and D246. A Phosphoserine modification is found at S101.

This sequence belongs to the phosphohexose mutase family. Mg(2+) serves as cofactor. Activated by phosphorylation.

It carries out the reaction alpha-D-glucosamine 1-phosphate = D-glucosamine 6-phosphate. Functionally, catalyzes the conversion of glucosamine-6-phosphate to glucosamine-1-phosphate. The polypeptide is Phosphoglucosamine mutase (Afipia carboxidovorans (strain ATCC 49405 / DSM 1227 / KCTC 32145 / OM5) (Oligotropha carboxidovorans)).